A 183-amino-acid polypeptide reads, in one-letter code: uncharacterized protein (183 aa).

It belongs to the asfivirus S183L family.

This is an uncharacterized protein from African swine fever virus (isolate Warthog/Namibia/Wart80/1980) (ASFV).